The chain runs to 434 residues: MAMQKIFAREILDSRGNPTVEVDLHTAKGRFRAAVPSGASTGIYEALELRDGDKARYLGKGVLKAVEHINKTLGPALLEKKLSVVDQEKVDKFMIELDGTENKSKFGANAILGVSLAVCKAGAAEKGVPLYRHIADLAGNPDLVLPVPAFNVINGGSHAGNKLAMQEFMILPVGASSFKEAMRIGAEVYHHLKGVIKAKYGKDATNVGDEGGFAPNILENNEALELLKTAIQAAGYPDKVVIGMDVAASEFYRNGKYDLDFKSPDDPARHISGEKLGELYKNFIQNYPVVSIEDPFDQDDWATWTSFLSGVDIQIVGDDLTVTNPKRIAQAVEKKACNCLLLKVNQIGSVTESIQACKLAQSNGWGVMVSHRSGETEDTFIADLVVGLCTGQIKTGAPCRSERLAKYNQLMRIEEALGDKAVFAGRKFRNPKAK.

Alanine 2 carries the post-translational modification N-acetylalanine. Position 72 is a phosphothreonine (threonine 72). Phosphoserine is present on residues serine 83 and serine 157. Substrate contacts are provided by histidine 158 and glutamate 167. Residue serine 176 is modified to Phosphoserine. Threonine 205 bears the Phosphothreonine mark. Catalysis depends on glutamate 210, which acts as the Proton donor. Threonine 229 carries the post-translational modification Phosphothreonine. At tyrosine 236 the chain carries Phosphotyrosine. Mg(2+) is bound at residue aspartate 245. A Phosphoserine modification is found at serine 263. Glutamate 293 and aspartate 318 together coordinate substrate. Residues glutamate 293 and aspartate 318 each contribute to the Mg(2+) site. Lysine 343 functions as the Proton acceptor in the catalytic mechanism. Substrate contacts are provided by residues 370–373 (SHRS) and lysine 394.

Belongs to the enolase family. Mammalian enolase is composed of 3 isozyme subunits, alpha, beta and gamma, which can form homodimers or heterodimers which are cell-type and development-specific. In vitro, interacts with several glycolytic enzymes including PKM, PGM, CKM and ALDO. Also binds PLG and troponin, in vitro. Interacts with PNKD. Mg(2+) serves as cofactor. As to expression, brain (at protein level). The alpha/alpha homodimer is expressed in embryo and in most adult tissues. The alpha/beta heterodimer and the beta/beta homodimer are found in striated muscle, and the alpha/gamma heterodimer and the gamma/gamma homodimer in neurons. In striated muscle, the fiber-type order of ENO3 expression is IIB &gt; IIX &gt; IIA &gt; I.

Its subcellular location is the cytoplasm. It carries out the reaction (2R)-2-phosphoglycerate = phosphoenolpyruvate + H2O. The protein operates within carbohydrate degradation; glycolysis; pyruvate from D-glyceraldehyde 3-phosphate: step 4/5. Its function is as follows. Glycolytic enzyme that catalyzes the conversion of 2-phosphoglycerate to phosphoenolpyruvate. Appears to have a function in striated muscle development and regeneration. This is Beta-enolase (Eno3) from Mus musculus (Mouse).